The primary structure comprises 461 residues: 23S rRNA (uracil(1939)-C(5))-methyltransferase RlmD (461 aa).

The tract at residues 1-26 is disordered; that stretch reads MAKHERGLRFQPTGGSKAPQIPTGKK. In terms of domain architecture, TRAM spans 20–78; sequence QIPTGKKQRLSIERLANDGRGIAFFEGKTWFVLGALAGEEVEARVLGAHGKVVEARTER. The [4Fe-4S] cluster site is built by Cys-91, Cys-97, Cys-100, and Cys-179. S-adenosyl-L-methionine is bound by residues Gln-283, Phe-312, Asn-317, Glu-333, Asp-360, and Asp-381. The active-site Nucleophile is Cys-407.

This sequence belongs to the class I-like SAM-binding methyltransferase superfamily. RNA M5U methyltransferase family. RlmD subfamily.

The catalysed reaction is uridine(1939) in 23S rRNA + S-adenosyl-L-methionine = 5-methyluridine(1939) in 23S rRNA + S-adenosyl-L-homocysteine + H(+). Functionally, catalyzes the formation of 5-methyl-uridine at position 1939 (m5U1939) in 23S rRNA. The sequence is that of 23S rRNA (uracil(1939)-C(5))-methyltransferase RlmD from Pseudomonas fluorescens (strain Pf0-1).